Here is a 250-residue protein sequence, read N- to C-terminus: UPF0524 protein C3orf70 (250 aa).

The disordered stretch occupies residues 201–250 (ESCDEDTEEGAELSSEEDYSPESSWEPDECTLLSPSQSDLEVIETIETTV). A compositionally biased stretch (acidic residues) spans 202 to 229 (SCDEDTEEGAELSSEEDYSPESSWEPDE).

Belongs to the UPF0524 family.

May play a role in neuronal and neurobehavioral development. The sequence is that of UPF0524 protein C3orf70 (C3orf70) from Homo sapiens (Human).